A 27-amino-acid chain; its full sequence is Alpha-benincasin (27 aa).

In terms of biological role, has weak antifungal activity toward C.comatus and P.piricola but not toward M.arachidicola. Inhibits cell-free translation in rabbit reticulocyte lysate system. The protein is Alpha-benincasin of Benincasa hispida (Wax gourd).